A 333-amino-acid chain; its full sequence is 4-hydroxythreonine-4-phosphate dehydrogenase (333 aa).

Substrate-binding residues include His-136 and Thr-137. A divalent metal cation-binding residues include His-166, His-211, and His-266. Substrate-binding residues include Lys-274, Asn-283, and Arg-292.

This sequence belongs to the PdxA family. Homodimer. Requires Zn(2+) as cofactor. Mg(2+) serves as cofactor. The cofactor is Co(2+).

The protein localises to the cytoplasm. It catalyses the reaction 4-(phosphooxy)-L-threonine + NAD(+) = 3-amino-2-oxopropyl phosphate + CO2 + NADH. The protein operates within cofactor biosynthesis; pyridoxine 5'-phosphate biosynthesis; pyridoxine 5'-phosphate from D-erythrose 4-phosphate: step 4/5. Its function is as follows. Catalyzes the NAD(P)-dependent oxidation of 4-(phosphooxy)-L-threonine (HTP) into 2-amino-3-oxo-4-(phosphooxy)butyric acid which spontaneously decarboxylates to form 3-amino-2-oxopropyl phosphate (AHAP). This is 4-hydroxythreonine-4-phosphate dehydrogenase from Acidithiobacillus ferrooxidans (strain ATCC 23270 / DSM 14882 / CIP 104768 / NCIMB 8455) (Ferrobacillus ferrooxidans (strain ATCC 23270)).